The chain runs to 273 residues: Phosphate import ATP-binding protein PstB (273 aa).

The ABC transporter domain occupies 19–258 (ISIQNVTISY…FNETEKIFNS (240 aa)). 51–58 (GPSGCGKS) contributes to the ATP binding site.

Belongs to the ABC transporter superfamily. Phosphate importer (TC 3.A.1.7) family. As to quaternary structure, the complex is composed of two ATP-binding proteins (PstB), two transmembrane proteins (PstC and PstA) and a solute-binding protein (PstS).

It localises to the cell inner membrane. It carries out the reaction phosphate(out) + ATP + H2O = ADP + 2 phosphate(in) + H(+). Its function is as follows. Part of the ABC transporter complex PstSACB involved in phosphate import. Responsible for energy coupling to the transport system. This chain is Phosphate import ATP-binding protein PstB, found in Parasynechococcus marenigrum (strain WH8102).